Here is a 308-residue protein sequence, read N- to C-terminus: Secreted frizzled-related protein 1 (308 aa).

The N-terminal stretch at Met1–Ala25 is a signal peptide. The region spanning Thr47–Met163 is the FZ domain. Intrachain disulfides connect Cys52–Cys115, Cys62–Cys108, Cys99–Cys134, Cys123–Cys160, and Cys127–Cys151. Asn167 is a glycosylation site (N-linked (GlcNAc...) asparagine). 3 disulfide bridges follow: Cys180-Cys250, Cys183-Cys252, and Cys197-Cys300. The region spanning Cys180–Cys300 is the NTR domain.

The protein belongs to the secreted frizzled-related protein (sFRP) family. In terms of assembly, interacts with WNT1, WNT2, WNT4, WNT8, MYOC and FRZD6. As to expression, highest levels in aortic endothelium, heart, spleen and eye. Lower levels in lung, brain and kidney. Weak expression in liver, skeletal muscle and the medial layer of the aorta. In the cortical brain, localized to neurons and small blood vessels. In the retina, localized to the inner and outer nuclear layers with high expression in the neuronal cell bodies. In the heart, restricted to myocytes. In lung, highest expression found in the epithelium of terminal bronchioles. In kidney, localized to the epithelium of collecting ducts of the medulla and, in spleen, expression restricted to the red pulp in cells associated with the sinuses.

The protein resides in the secreted. Functionally, soluble frizzled-related proteins (sFRPS) function as modulators of Wnt signaling through direct interaction with Wnts. They have a role in regulating cell growth and differentiation in specific cell types. SFRP1 decreases intracellular beta-catenin levels. Has antiproliferative effects on vascular cells, in vitro and in vivo, and can induce, in vivo, an angiogenic response. In vascular cell cycle, delays the G1 phase and entry into the S phase. In kidney development, inhibits tubule formation and bud growth in metanephroi. Inhibits WNT1/WNT4-mediated TCF-dependent transcription. The sequence is that of Secreted frizzled-related protein 1 (SFRP1) from Bos taurus (Bovine).